A 108-amino-acid chain; its full sequence is Tetrahydromethanopterin S-methyltransferase subunit B (108 aa).

Residues 81–101 traverse the membrane as a helical segment; it reads FFGFWISLSILTLGLILVIGL.

It belongs to the MtrB family. As to quaternary structure, the complex is composed of 8 subunits; MtrA, MtrB, MtrC, MtrD, MtrE, MtrF, MtrG and MtrH.

The protein localises to the cell membrane. It carries out the reaction 5-methyl-5,6,7,8-tetrahydromethanopterin + coenzyme M + 2 Na(+)(in) = 5,6,7,8-tetrahydromethanopterin + methyl-coenzyme M + 2 Na(+)(out). The protein operates within one-carbon metabolism; methanogenesis from CO(2); methyl-coenzyme M from 5,10-methylene-5,6,7,8-tetrahydromethanopterin: step 2/2. Its function is as follows. Part of a complex that catalyzes the formation of methyl-coenzyme M and tetrahydromethanopterin from coenzyme M and methyl-tetrahydromethanopterin. This is an energy-conserving, sodium-ion translocating step. The sequence is that of Tetrahydromethanopterin S-methyltransferase subunit B from Methanococcus aeolicus (strain ATCC BAA-1280 / DSM 17508 / OCM 812 / Nankai-3).